We begin with the raw amino-acid sequence, 656 residues long: Chaperone protein DnaK (656 aa).

T204 is subject to Phosphothreonine; by autocatalysis. The interval 607–656 (VYAKKGGAAGAPPGGEAEGEPQAQAGGKKEDVVDAEFEEVKDEKKKDEDK) is disordered. Low complexity predominate over residues 620–632 (GGEAEGEPQAQAG). Positions 647-656 (KDEKKKDEDK) are enriched in basic and acidic residues.

This sequence belongs to the heat shock protein 70 family.

In terms of biological role, acts as a chaperone. This Coxiella burnetii (strain CbuK_Q154) (Coxiella burnetii (strain Q154)) protein is Chaperone protein DnaK.